Here is a 143-residue protein sequence, read N- to C-terminus: Agaricus bisporus lectin (143 aa).

4 residues coordinate beta-D-Gal-(1-&gt;3)-alpha-D-GalNAc: Ala-29, Ser-48, Gly-49, and Asn-73. Positions 82, 103, and 114 each coordinate N-acetyl-beta-D-glucosamine.

Belongs to the fungal fruit body lectin family. In terms of assembly, homotetramer.

In terms of biological role, lectin that recognizes O-linked galactose-beta-1,3-N-acetylgalactosamine, a disaccharide (Thomsen-Friedenreich antigen or T-disaccharide), present on cell surface glycoproteins. Can also bind galactose-beta-1,3-N-acetylglucosamine. Does not bind monosaccharides. Can be internalized by clathrin-coated vesicles after binding to surface glycoproteins. After internalization it inhibits nuclear import of nuclear localization signal dependent proteins. Inhibits proliferation of malignant cells without cytotoxicity for normal cells. The sequence is that of Agaricus bisporus lectin from Agaricus bisporus (White button mushroom).